Here is a 116-residue protein sequence, read N- to C-terminus: Immunoglobulin heavy variable 3-13 (116 aa).

The signal sequence occupies residues 1-19; it reads MELGLSWVFLVAILEGVQC. A framework-1 region spans residues 20–44; the sequence is EVQLVESGGGLVQPGGSLRLSCAAS. One can recognise an Ig-like domain in the interval 20–116; that stretch reads EVQLVESGGG…GDTAVYYCAR (97 aa). Cysteine 41 and cysteine 114 form a disulfide bridge. The interval 45–52 is complementarity-determining-1; it reads GFTFSSYD. Residues 53-69 are framework-2; sequence MHWVRQATGKGLEWVSA. The tract at residues 70-76 is complementarity-determining-2; sequence IGTAGDP. A framework-3 region spans residues 77-114; it reads YYPGSVKGRFTISRENAKNSLYLQMNSLRAGDTAVYYC. The tract at residues 115–116 is complementarity-determining-3; the sequence is AR.

As to quaternary structure, immunoglobulins are composed of two identical heavy chains and two identical light chains; disulfide-linked.

Its subcellular location is the secreted. The protein localises to the cell membrane. In terms of biological role, v region of the variable domain of immunoglobulin heavy chains that participates in the antigen recognition. Immunoglobulins, also known as antibodies, are membrane-bound or secreted glycoproteins produced by B lymphocytes. In the recognition phase of humoral immunity, the membrane-bound immunoglobulins serve as receptors which, upon binding of a specific antigen, trigger the clonal expansion and differentiation of B lymphocytes into immunoglobulins-secreting plasma cells. Secreted immunoglobulins mediate the effector phase of humoral immunity, which results in the elimination of bound antigens. The antigen binding site is formed by the variable domain of one heavy chain, together with that of its associated light chain. Thus, each immunoglobulin has two antigen binding sites with remarkable affinity for a particular antigen. The variable domains are assembled by a process called V-(D)-J rearrangement and can then be subjected to somatic hypermutations which, after exposure to antigen and selection, allow affinity maturation for a particular antigen. The polypeptide is Immunoglobulin heavy variable 3-13 (Homo sapiens (Human)).